The sequence spans 312 residues: Ribosomal protein L11 methyltransferase (312 aa).

S-adenosyl-L-methionine-binding residues include Thr-162, Gly-183, Asp-205, and Asn-248.

The protein belongs to the methyltransferase superfamily. PrmA family.

It localises to the cytoplasm. The enzyme catalyses L-lysyl-[protein] + 3 S-adenosyl-L-methionine = N(6),N(6),N(6)-trimethyl-L-lysyl-[protein] + 3 S-adenosyl-L-homocysteine + 3 H(+). Methylates ribosomal protein L11. This is Ribosomal protein L11 methyltransferase from Bacillus cereus (strain Q1).